Here is a 520-residue protein sequence, read N- to C-terminus: MTPIMMVLISILLILLGLVVGYFVRKTIAEAKIAGARGAAEQILEDAKRDAEALKKEALLEAKDEIHKLRIDAEQEVRERRNELQKQENRLLQKEENLDRKHEGIDKREAMLEKKDHSLNERQQHIEEMESKVDEMIRMQQSELERISSLTRDEAKQIILERVENELSHDIAIMTKETENRAKEEADKKAKNILSLALQRCAADHVAETTVSVVNLPNDEMKGRIIGREGRNIRTLETLTGIDLIIDDTPEAVILSGFDPIRRETARIALDKLVQDGRIHPARIEEMVEKSRREVDDYIREMGEQTTFEVGVHGLHPDLIKILGRLKFRTSYGQNVLKHSMEVAFLAGLMASELGEDAKLAKRAGLLHDIGKAIDHEVEGSHVEIGVELATKYKEHPVVINSIASHHGDEEPTSIIAVLVAAADALSAARPGARSETLENYIRRLEKLEEISESYEGVEKSFAIQAGREVRIMVKPDSINDLEAHRLARDIRKRIEDELDYPGHIKVTVIRETRAVEYAK.

Over 1-3 (MTP) the chain is Extracellular. A helical transmembrane segment spans residues 4-24 (IMMVLISILLILLGLVVGYFV). At 25-520 (RKTIAEAKIA…RETRAVEYAK (496 aa)) the chain is on the cytoplasmic side. Residues 29–141 (AEAKIAGARG…KVDEMIRMQQ (113 aa)) are a coiled coil. Residues 210–273 (TVSVVNLPND…ETARIALDKL (64 aa)) form the KH domain. Positions 336 to 429 (VLKHSMEVAF…VAAADALSAA (94 aa)) constitute an HD domain.

It belongs to the RNase Y family. As to quaternary structure, homodimer. Component of a possible RNA degradosome complex composed of rny, rnjA, rnjB, pnp, pfkA and eno (although rnjA and rnjB's presence is unclear). Interacts with RNA helicase CshA which may also be a member of the RNA degradosome complex. Interacts with full-length dynamin-like protein DynA. Requires Mg(2+) as cofactor. Mn(2+) is required as a cofactor. It depends on Zn(2+) as a cofactor.

It localises to the cell membrane. Shows preference for transcripts carrying a monophosphate group at the 5' end. In terms of biological role, endoribonuclease that initiates mRNA decay. Initiates the decay of all SAM-dependent riboswitches, such as yitJ riboswitch. Involved in processing of the gapA operon mRNA, it cleaves between cggR and gapA. Is also the decay-initiating endonuclease for rpsO mRNA. Involved in degradation of type I toxin-antitoxin system bsrG/SR4 RNAs and a minor role in degradation of type I toxin-antitoxin system bsrE/SR5 degradation. The polypeptide is Ribonuclease Y (rny) (Bacillus subtilis (strain 168)).